Reading from the N-terminus, the 160-residue chain is Sec-independent protein translocase protein TatB (160 aa).

Residues 1-21 (MFGMGFFEILVVLVVAIIFLG) form a helical membrane-spanning segment. Residues 118–160 (HLNEEVSNEEALNKEVSSDESPKEVQLATDNNTKEHDKEKEHV) form a disordered region. Basic and acidic residues-rich tracts occupy residues 128–140 (ALNK…ESPK) and 149–160 (NTKEHDKEKEHV).

It belongs to the TatB family. In terms of assembly, the Tat system comprises two distinct complexes: a TatABC complex, containing multiple copies of TatA, TatB and TatC subunits, and a separate TatA complex, containing only TatA subunits. Substrates initially bind to the TatABC complex, which probably triggers association of the separate TatA complex to form the active translocon.

Its subcellular location is the cell inner membrane. Part of the twin-arginine translocation (Tat) system that transports large folded proteins containing a characteristic twin-arginine motif in their signal peptide across membranes. Together with TatC, TatB is part of a receptor directly interacting with Tat signal peptides. TatB may form an oligomeric binding site that transiently accommodates folded Tat precursor proteins before their translocation. The polypeptide is Sec-independent protein translocase protein TatB (Helicobacter pylori (strain HPAG1)).